The sequence spans 293 residues: Diaminopimelate epimerase (293 aa).

Substrate is bound by residues N17, Q49, and N69. C78 (proton donor) is an active-site residue. Substrate contacts are provided by residues G79–N80, N169, N203, and E221–R222. C230 serves as the catalytic Proton acceptor. G231–S232 serves as a coordination point for substrate.

The protein belongs to the diaminopimelate epimerase family. In terms of assembly, homodimer.

The protein resides in the cytoplasm. It catalyses the reaction (2S,6S)-2,6-diaminopimelate = meso-2,6-diaminopimelate. The protein operates within amino-acid biosynthesis; L-lysine biosynthesis via DAP pathway; DL-2,6-diaminopimelate from LL-2,6-diaminopimelate: step 1/1. Functionally, catalyzes the stereoinversion of LL-2,6-diaminopimelate (L,L-DAP) to meso-diaminopimelate (meso-DAP), a precursor of L-lysine and an essential component of the bacterial peptidoglycan. The sequence is that of Diaminopimelate epimerase from Methylobacterium sp. (strain 4-46).